The chain runs to 329 residues: Serpentine receptor class alpha-6 (329 aa).

7 helical membrane passes run 26 to 46, 68 to 88, 104 to 124, 143 to 163, 187 to 207, 238 to 258, and 273 to 293; these read VDLLAIILAFFASYFAIKIVI, LYQISYGIEAIGMLYRGFFML, YFKVLMIGTSGMIFGQTGLLI, IGVCISLIVLVCSTSSGFIIL, NLFSILSTVLTLFNLIVSIFI, ICFLALSQFLWMFMYSFGILI, and FWIAWCYTMPFIALMFPVLLI.

It belongs to the nematode receptor-like protein sra family.

It localises to the membrane. The chain is Serpentine receptor class alpha-6 (sra-6) from Caenorhabditis elegans.